The following is a 1001-amino-acid chain: X-linked retinitis pigmentosa GTPase regulator (1001 aa).

RCC1 repeat units lie at residues 54-105 (NKLY…STDT), 106-158 (GGVY…LTED), 159-208 (GKLF…VTMD), 209-261 (GELY…LTEK), 262-313 (VVYA…MTEL), and 314-367 (GLLY…FATP). The disordered stretch occupies residues 404-428 (SLSARLRRRERERPPCSASMVGTLP). Position 518 is a phosphoserine (Ser-518). Composition is skewed to basic and acidic residues over residues 631-641 (KKIRESEENSK) and 659-671 (EDNK…RRSS). Disordered stretches follow at residues 631-738 (KKIR…WYDR), 794-869 (NLEF…EGSE), 902-925 (PKGH…DPTS), and 962-1001 (GDQI…CTIL). Acidic residues-rich tracts occupy residues 679–691 (SETE…DSYM) and 717–731 (EKDE…EVET). Composition is skewed to basic and acidic residues over residues 794 to 818 (NLEF…EKEA), 847 to 857 (EERKEGEKEIV), and 902 to 911 (PKGHMYDRVK). Residues 976–1001 (QNHMGQNLQDSTTPNMEGKSKSCTIL) show a composition bias toward polar residues. Cys-998 is subject to Cysteine methyl ester. Cys-998 carries S-geranylgeranyl cysteine lipidation. Residues 999-1001 (TIL) constitute a propeptide, removed in mature form.

As to quaternary structure, interacts with SPATA7. Interacts with PDE6D. Interacts with RPGRIP1 and RPGRIP1L; PDE6D, RPGRIP1 and RPGRIP1L may compete for the same binding sites. Interacts with NPM1. Interacts with PDE6D. Isoform 5 interacts (via N-terminus) with SMC1A and SMC3. Isoform 5 interacts with CEP290. Interacts with WHRN. Interacts with RAB37 and RAB8A (in GDP-bound forms); functions as GEF for RAB37 and RAB8A. Prenylated. In terms of tissue distribution, expressed in the retina (at protein level). Located mainly in the connecting cilia between the outer segment and inner segment and also observed in the outer plexiform layer, inner plexiform layer, and ganglion cell layer of the retinas. Isoform 1: Expressed in the retina (at protein level). Isoform 5: Expressed in the retina (at protein level). Expressed in the brain. Expressed in the testis (at protein level). Expressed in kidney (at protein level).

The protein localises to the golgi apparatus. It localises to the cytoplasm. It is found in the cytoskeleton. Its subcellular location is the microtubule organizing center. The protein resides in the centrosome. The protein localises to the cell projection. It localises to the cilium. It is found in the cilium basal body. Its subcellular location is the cilium axoneme. The protein resides in the flagellum axoneme. Functionally, acts as a guanine-nucleotide releasing factor (GEF) for RAB8A and RAB37 by promoting the conversion of inactive RAB-GDP to the active form RAB-GTP. GEF activity towards RAB8A may facilitate ciliary trafficking by modulating ciliary intracellular localization of RAB8A. GEF activity towards RAB37 maintains autophagic homeostasis and retinal function. Involved in photoreceptor integrity. May control cilia formation by regulating actin stress filaments and cell contractility. May be involved in microtubule organization and regulation of transport in primary cilia. In terms of biological role, isoform 5 may play a critical role in spermatogenesis and in intraflagellar transport processes. The polypeptide is X-linked retinitis pigmentosa GTPase regulator (Mus musculus (Mouse)).